The following is a 344-amino-acid chain: N-lysine methyltransferase KMT5A-A (344 aa).

The interval 143–176 is disordered; that stretch reads TSSKHRKPARRKVKRSTKRAAESKSPANRKVTDY. Residues 145-160 are compositionally biased toward basic residues; sequence SKHRKPARRKVKRSTK. In terms of domain architecture, SET spans 208 to 329; sequence DGMMVRFIEG…EGEELLYDYG (122 aa). S-adenosyl-L-methionine contacts are provided by residues 218 to 220, Tyr263, and 290 to 291; these read KGR and NH.

It belongs to the class V-like SAM-binding methyltransferase superfamily. Histone-lysine methyltransferase family. PR/SET subfamily.

The protein localises to the nucleus. It is found in the chromosome. The catalysed reaction is L-lysyl(20)-[histone H4] + S-adenosyl-L-methionine = N(6)-methyl-L-lysyl(20)-[histone H4] + S-adenosyl-L-homocysteine + H(+). It carries out the reaction L-lysyl-[protein] + S-adenosyl-L-methionine = N(6)-methyl-L-lysyl-[protein] + S-adenosyl-L-homocysteine + H(+). Functionally, protein-lysine N-methyltransferase that monomethylates both histones and non-histone proteins. Specifically monomethylates 'Lys-20' of histone H4 (H4K20me1). H4K20me1 is enriched during mitosis and represents a specific tag for epigenetic transcriptional repression. Mainly functions in euchromatin regions, thereby playing a central role in the silencing of euchromatic genes. Required for cell proliferation, probably by contributing to the maintenance of proper higher-order structure of DNA during mitosis. Involved in chromosome condensation and proper cytokinesis. This Danio rerio (Zebrafish) protein is N-lysine methyltransferase KMT5A-A.